We begin with the raw amino-acid sequence, 2995 residues long: Striated muscle preferentially expressed protein kinase (2995 aa).

Residues 27–109 enclose the Ig-like 1 domain; sequence PPVFLRKLKW…GEARTSAVLA (83 aa). A disulfide bond links Cys50 and Cys93. 2 disordered regions span residues 250 to 272 and 384 to 467; these read ITGS…KVSQ and LTQT…NSKP. Positions 384–404 are enriched in polar residues; that stretch reads LTQTDKQSSVSTESVPTQVIQ. The segment covering 454–464 has biased composition (low complexity); the sequence is PPEMNENQENN. Ig-like domains lie at 613 to 701 and 714 to 802; these read PAES…EELI and PLFT…AELY. Cys639 and Cys691 are oxidised to a cystine. The interval 815 to 834 is disordered; it reads SRLEKMPSIPEEPEVPEGEV. The Ig-like 4 domain maps to 840 to 930; that stretch reads PDFIKPLSDL…AACYAHLYVA (91 aa). Cys861 and Cys912 are disulfide-bonded. Positions 937 to 1035 constitute a Fibronectin type-III 1 domain; it reads PDGPPVIESV…TDLVQLVDRG (99 aa). Positions 1135-1224 constitute an Ig-like 5 domain; sequence PPIFETIMED…GSVSCKAELT (90 aa). The Protein kinase 1 domain occupies 1255–1505; it reads YDIHKEIGRG…ATECLLHPWF (251 aa). Residues 1261 to 1269 and Lys1283 each bind ATP; that span reads IGRGAFSYV. The active-site Proton acceptor is the Asp1372. Disordered regions lie at residues 1559-1582, 1776-1839, 2017-2058, 2163-2189, 2211-2254, and 2268-2322; these read VPRN…DIDE, RNFR…STGD, LKRL…TGLK, VHSR…VEKQ, SGIS…KMDI, and SKET…KEDF. Residues 1786–1795 show a composition bias toward polar residues; sequence SGDSGTFNND. Positions 2274–2284 are enriched in low complexity; the sequence is SSSSAHSIESS. Basic and acidic residues predominate over residues 2289-2299; it reads TEIRSRWDRWG. The region spanning 2323–2413 is the Ig-like 6 domain; it reads PPVFHIALKD…ASVTTSCILT (91 aa). A disulfide bridge links Cys2345 with Cys2397. In terms of domain architecture, Fibronectin type-III 2 spans 2420–2513; sequence CPGTPEIRQI…DGVSIDTKVT (94 aa). 2 disordered regions span residues 2574–2609 and 2648–2676; these read PKMS…YTAP and GEGA…LRQG. Composition is skewed to polar residues over residues 2587 to 2605 and 2652 to 2674; these read SSVN…SPRS and SSPT…TTLR. A Protein kinase 2 domain is found at 2682–2934; the sequence is YSFLDEKARG…IKDCLNHSWL (253 aa). Residues 2688–2696 and Lys2711 each bind ATP; that span reads KARGRFGVI. The Proton acceptor role is filled by Asp2801.

Belongs to the protein kinase superfamily. CAMK Ser/Thr protein kinase family. May be autophosphorylated. Preferentially expressed in striated muscle.

The protein resides in the nucleus. It catalyses the reaction L-seryl-[protein] + ATP = O-phospho-L-seryl-[protein] + ADP + H(+). The catalysed reaction is L-threonyl-[protein] + ATP = O-phospho-L-threonyl-[protein] + ADP + H(+). The protein is Striated muscle preferentially expressed protein kinase (speg) of Danio rerio (Zebrafish).